A 94-amino-acid polypeptide reads, in one-letter code: Antifungal protein (94 aa).

The signal sequence occupies residues 1–21; it reads MKFVSLASLGFALVAALGAVA. A propeptide spanning residues 22-43 is cleaved from the precursor; it reads TPVEADSLTAGGLDARDESAVL. Intrachain disulfides connect Cys50–Cys76, Cys57–Cys83, Cys69–Cys71, and Cys92–Cys94.

It belongs to the antifungal protein pafB family.

It localises to the secreted. The protein localises to the host cytoplasm. In terms of biological role, antifungal protein that acts as an inhibitor of growth of a variety of fungal species. The protein is Antifungal protein (afp) of Aspergillus giganteus.